The primary structure comprises 431 residues: Putative serine/threonine-protein kinase A (431 aa).

Positions 20–279 constitute a Protein kinase domain; sequence YLNKGIVGLG…VREIFQIPYI (260 aa). ATP is bound by residues 26 to 34 and lysine 49; that span reads VGLGSYGEA. Residue aspartate 147 is the Proton acceptor of the active site. The region spanning 331-429 is the PH domain; sequence DVTHRGHVNK…WVHAIQRGIG (99 aa).

This sequence belongs to the protein kinase superfamily. Ser/Thr protein kinase family.

It carries out the reaction L-seryl-[protein] + ATP = O-phospho-L-seryl-[protein] + ADP + H(+). It catalyses the reaction L-threonyl-[protein] + ATP = O-phospho-L-threonyl-[protein] + ADP + H(+). The chain is Putative serine/threonine-protein kinase A (NRKA) from Trypanosoma brucei brucei.